A 288-amino-acid chain; its full sequence is Phenazine biosynthesis-like domain-containing protein 1 (288 aa).

Residue Glu-46 is part of the active site.

This sequence belongs to the PhzF family.

In Mus musculus (Mouse), this protein is Phenazine biosynthesis-like domain-containing protein 1 (Pbld1).